The sequence spans 1259 residues: Zinc finger protein BRUTUS-like At1g74770 (1259 aa).

A helical membrane pass occupies residues 441-461 (LLYTSIHVLPLGLLKCVILWF). Composition is skewed to basic and acidic residues over residues 904 to 916 (KEEKDLERSESKK) and 924 to 934 (EGDKEQTDKMS). Residues 904 to 938 (KEEKDLERSESKKICRGSNQEGDKEQTDKMSQKVS) are disordered. The CHY-type zinc-finger motif lies at 1018-1087 (PHSLIFGCNH…ANCSNTSCKS (70 aa)). 24 residues coordinate Zn(2+): cysteine 1025, histidine 1027, cysteine 1038, cysteine 1039, cysteine 1045, cysteine 1048, histidine 1049, histidine 1055, cysteine 1067, cysteine 1070, cysteine 1080, cysteine 1085, cysteine 1094, cysteine 1097, histidine 1108, cysteine 1109, cysteine 1112, cysteine 1115, histidine 1127, cysteine 1128, cysteine 1131, cysteine 1134, histidine 1142, and cysteine 1144. A CTCHY-type zinc finger spans residues 1089-1152 (MGKYFCKICK…VCREKCLEDN (64 aa)). Residues 1153–1195 (CPICHEYIFTSSSPVKALPCGHLMHSTCFQEYTCSHYTCPVCS) form an RING-type; atypical zinc finger.

In terms of assembly, binds zinc and iron ions.

The protein resides in the membrane. The protein localises to the nucleus. Its pathway is protein modification; protein ubiquitination. Probable E3 ubiquitin-protein ligase that may regulate the response to iron deficiency and thus contributes to iron homeostasis. The chain is Zinc finger protein BRUTUS-like At1g74770 from Arabidopsis thaliana (Mouse-ear cress).